A 179-amino-acid polypeptide reads, in one-letter code: Adenine phosphoribosyltransferase (179 aa).

The protein belongs to the purine/pyrimidine phosphoribosyltransferase family. In terms of assembly, homodimer.

It is found in the cytoplasm. It carries out the reaction AMP + diphosphate = 5-phospho-alpha-D-ribose 1-diphosphate + adenine. Its pathway is purine metabolism; AMP biosynthesis via salvage pathway; AMP from adenine: step 1/1. In terms of biological role, catalyzes a salvage reaction resulting in the formation of AMP, that is energically less costly than de novo synthesis. The protein is Adenine phosphoribosyltransferase of Azorhizobium caulinodans (strain ATCC 43989 / DSM 5975 / JCM 20966 / LMG 6465 / NBRC 14845 / NCIMB 13405 / ORS 571).